A 290-amino-acid polypeptide reads, in one-letter code: CTP-dependent diacylglycerol kinase 1 (290 aa).

The disordered stretch occupies residues 1–33 (MGTEDAIALPNSTLEPRTEAKQRLSSKSHQVSA). Topologically, residues 1-77 (MGTEDAIALP…FITKHEIPRK (77 aa)) are lumenal. Asparagine 11 carries an N-linked (GlcNAc...) asparagine glycan. A compositionally biased stretch (polar residues) spans 23–33 (RLSSKSHQVSA). Residues serine 44, serine 45, and serine 46 each carry the phosphoserine modification. Residues 78 to 95 (VFHSSIGFITLYLYTQGI) traverse the membrane as a helical segment. The Cytoplasmic portion of the chain corresponds to 96-103 (NYKNVLWP). Residues 104–124 (LIYAFIILFILDLIRLNWPFF) form a helical membrane-spanning segment. The Lumenal portion of the chain corresponds to 125 to 140 (NMLYCRTVGALMRKKE). The chain crosses the membrane as a helical span at residues 141–161 (IHTYNGVLWYILGLIFSFNFF). The Cytoplasmic portion of the chain corresponds to 162–163 (SK). The helical transmembrane segment at 164–184 (DVTLISLFLLSWSDTAAATIG) threads the bilayer. Residues 185 to 203 (RKYGHLTPKVARNKSLAGS) are Lumenal-facing. Asparagine 197 carries N-linked (GlcNAc...) asparagine glycosylation. The chain crosses the membrane as a helical span at residues 204–224 (IAAFTVGVITCWVFYGYFVPA). The Cytoplasmic segment spans residues 225–244 (YSYVNKPGEIQWSPETSRLS). A helical transmembrane segment spans residues 245-265 (LNMLSLLGGVVAALSEGIDLF). The Lumenal segment spans residues 266–290 (NWDDNFTIPVLSSLFMNAVIKTFKK). N-linked (GlcNAc...) asparagine glycosylation is present at asparagine 270.

This sequence belongs to the DGK1 family. Ca(2+) is required as a cofactor. Mg(2+) serves as cofactor. In terms of processing, CKII-mediated phosphorylation of Ser-45 and Ser-46 regulates its function in the production of PA.

Its subcellular location is the endoplasmic reticulum membrane. It is found in the nucleus membrane. The catalysed reaction is a 1,2-diacyl-sn-glycerol + CTP = a 1,2-diacyl-sn-glycero-3-phosphate + CDP + H(+). The enzyme catalyses 1,2-di-(9Z-octadecenoyl)-sn-glycerol + CTP = 1,2-di-(9Z-octadecenoyl)-sn-glycero-3-phosphate + CDP + H(+). Its activity is regulated as follows. Inhibited by N-ethylmaleimide, dCTP, and sphingoid bases including sphinganine, sphingosine and phytosphingosine. DAG pyrophosphate, cardiolipin, CDP-DAG, and lyso-PA inhibited activity by 23-66%. Also inhibited by Ca(2+) concentrations of more than 1 mM, by addition of EDTA or EGTA at 5 mM, and by 5 mM Mn(2+) and Zn(2+). Stimulated by major membrane phospholipids including phosphatidylcholine, phosphatidylethanolamine, phosphatidylinositol, phosphatidylserine, phosphatidylglycerol, and phosphatidate. Also stimulated to a maximum by addition of TritonX-100 at a concentration of 1 mM, followed by an apparent inhibition of activity at concentrations above 1 mM. Functionally, CTP-dependent diacylglycerol kinase that catalyzes the phosphorylation of diacylglycerol (DAG) to phosphatidate (PA). Controls phosphatidate levels at the nuclear envelope. Counteracts the activity of PA phosphatase PAH1/SMP2, controlling the levels of PA and DAG for the synthesis of triacylglycerol and membrane phospholipids. May be involved in vesicle trafficking between the endoplasmic reticulum and the Golgi apparatus. Required to convert triacylglycerol-derived DAG to PA for phospholipid synthesis during growth resumption from stationary phase in the absence of de novo fatty acid synthesis. Involved in the resistance to nickel chloride and nalidixic acid. The chain is CTP-dependent diacylglycerol kinase 1 (DGK1) from Saccharomyces cerevisiae (strain ATCC 204508 / S288c) (Baker's yeast).